The chain runs to 347 residues: Beta-hexosaminidase (347 aa).

Substrate contacts are provided by residues Asp-62, Arg-70, Arg-134, and 164–165 (KH). The active-site Proton donor/acceptor is the His-177. Catalysis depends on Asp-249, which acts as the Nucleophile.

Belongs to the glycosyl hydrolase 3 family. NagZ subfamily.

The protein resides in the cytoplasm. The catalysed reaction is Hydrolysis of terminal non-reducing N-acetyl-D-hexosamine residues in N-acetyl-beta-D-hexosaminides.. The protein operates within cell wall biogenesis; peptidoglycan recycling. Its function is as follows. Plays a role in peptidoglycan recycling by cleaving the terminal beta-1,4-linked N-acetylglucosamine (GlcNAc) from peptide-linked peptidoglycan fragments, giving rise to free GlcNAc, anhydro-N-acetylmuramic acid and anhydro-N-acetylmuramic acid-linked peptides. The chain is Beta-hexosaminidase from Mannheimia succiniciproducens (strain KCTC 0769BP / MBEL55E).